We begin with the raw amino-acid sequence, 353 residues long: Stachydrine N-demethylase reductase subunit Stc4 (353 aa).

The FAD-binding FR-type domain occupies 11–114; sequence SDAEPLECVT…IGPAGKFSIV (104 aa). The 2Fe-2S ferredoxin-type domain occupies 269–353; the sequence is AEIAFALSGV…KPLRRVSVEA (85 aa). Residues Cys303, Cys308, Cys311, and Cys341 each contribute to the [2Fe-2S] cluster site.

It in the N-terminal section; belongs to the FAD-binding oxidoreductase type 6 family. The system is probably composed of an oxygenase subunit (Stc2) and two reductase subunits (Stc3 and Stc4). It depends on FAD as a cofactor. Requires [2Fe-2S] cluster as cofactor.

In terms of biological role, reductase involved in the catabolism of stachydrine (L-proline betaine), a source of carbon and nitrogen. Part of a Rieske-type oxygenase system that catalyzes the demethylation of stachydrine to produce N-methyl-L-proline (monomethylproline). This subunit is probably involved in the transfer of electrons from NAD(P)H to the catalytic subunit Stc2. The chain is Stachydrine N-demethylase reductase subunit Stc4 from Rhizobium meliloti (strain 1021) (Ensifer meliloti).